Here is a 77-residue protein sequence, read N- to C-terminus: Defensin-like protein 91 (77 aa).

Positions 1 to 27 are cleaved as a signal peptide; it reads METKKISYFLLPSLMIVALIFQPMCSA. Disulfide bonds link C38–C75, C43–C64, C49–C73, and C53–C74.

Belongs to the DEFL family.

The protein localises to the secreted. This Arabidopsis thaliana (Mouse-ear cress) protein is Defensin-like protein 91 (LCR47).